Consider the following 57-residue polypeptide: Small ribosomal subunit protein bS21 (57 aa).

Belongs to the bacterial ribosomal protein bS21 family.

The sequence is that of Small ribosomal subunit protein bS21 from Geobacillus kaustophilus (strain HTA426).